We begin with the raw amino-acid sequence, 237 residues long: Uridylate kinase (237 aa).

9 to 12 (KLSG) is a binding site for ATP. The involved in allosteric activation by GTP stretch occupies residues 17 to 22 (GSQGYG). Glycine 51 provides a ligand contact to UMP. Glycine 52 and arginine 56 together coordinate ATP. UMP is bound by residues aspartate 71 and 132–139 (CGNPFFTT). ATP contacts are provided by threonine 159, tyrosine 165, and aspartate 168.

This sequence belongs to the UMP kinase family. As to quaternary structure, homohexamer.

It is found in the cytoplasm. It catalyses the reaction UMP + ATP = UDP + ADP. It functions in the pathway pyrimidine metabolism; CTP biosynthesis via de novo pathway; UDP from UMP (UMPK route): step 1/1. With respect to regulation, allosterically activated by GTP. Inhibited by UTP. Functionally, catalyzes the reversible phosphorylation of UMP to UDP. The protein is Uridylate kinase of Synechococcus sp. (strain CC9902).